The primary structure comprises 467 residues: MEVYNTLSRKIEKLEDIVDGKRVKMYVCGITAYDYSHIGHARSAVFFDVFRRYLEYLGYEVVYVQNFTDVDDKIINRAVKEGKTQKEVAEKFIEEYLKDMEALNVKKPTYQPKVTEHIPDIIEFIQNLIEKGYAYVIDGDVYFHVPAFEHYGELSKQSLEELNRHRIEPDERKRDVKDFALWKSAKEADLKAQAVFDSPWGRGRPGWHIECSVMSAKYLGVPFDIHGGGKDLIFPHHENERAQSFARFGVEPVKIWVHNDFIRIKGEKMSKSLGNIVRIRDVLQRYEGEVLRYFLLTAHYRSPLDYTEEALERAKRAYEYLRSALINLDMEIAYLKTFGDRKEGNQVDVEDYIRRFEEAMNRDLHTPDAIAVLHEFAGLINKSLYELSLNQAEELYEAFKRLCGVLGLFEKMERVPALSREDAEKVVERERARKERNFELADAIRDEFAKRGIRLIDTPKGTRWRVE.

Cys-28 lines the Zn(2+) pocket. The 'HIGH' region signature appears at Ile-30–His-40. Zn(2+)-binding residues include Cys-211, His-236, and Glu-240. The 'KMSKS' region motif lies at Lys-268 to Ser-272. Position 271 (Lys-271) interacts with ATP.

This sequence belongs to the class-I aminoacyl-tRNA synthetase family. It depends on Zn(2+) as a cofactor.

The protein localises to the cytoplasm. The catalysed reaction is tRNA(Cys) + L-cysteine + ATP = L-cysteinyl-tRNA(Cys) + AMP + diphosphate. In Archaeoglobus fulgidus (strain ATCC 49558 / DSM 4304 / JCM 9628 / NBRC 100126 / VC-16), this protein is Cysteine--tRNA ligase (cysS).